Consider the following 232-residue polypeptide: Lipoprotein-releasing system ATP-binding protein LolD 2 (232 aa).

The ABC transporter domain occupies valine 11 to leucine 231. Alanine 47 to serine 54 contacts ATP.

Belongs to the ABC transporter superfamily. Lipoprotein translocase (TC 3.A.1.125) family. In terms of assembly, the complex is composed of two ATP-binding proteins (LolD) and two transmembrane proteins (LolC and LolE).

Its subcellular location is the cell inner membrane. Functionally, part of the ABC transporter complex LolCDE involved in the translocation of mature outer membrane-directed lipoproteins, from the inner membrane to the periplasmic chaperone, LolA. Responsible for the formation of the LolA-lipoprotein complex in an ATP-dependent manner. The polypeptide is Lipoprotein-releasing system ATP-binding protein LolD 2 (Rhodopseudomonas palustris (strain ATCC BAA-98 / CGA009)).